The sequence spans 414 residues: 2,3-diketo-5-methylthiopentyl-1-phosphate enolase (414 aa).

The Proton acceptor role is filled by Lys99. Residues Lys148, 174-177, His265, Gly338, and 360-361 each bind substrate; these read KDDE and GG. Residues Lys174, Asp176, and Glu177 each coordinate Mg(2+). Position 174 is an N6-carboxylysine (Lys174).

This sequence belongs to the RuBisCO large chain family. Type IV subfamily. As to quaternary structure, homodimer. It depends on Mg(2+) as a cofactor.

The enzyme catalyses 5-methylsulfanyl-2,3-dioxopentyl phosphate = 2-hydroxy-5-methylsulfanyl-3-oxopent-1-enyl phosphate. Its pathway is amino-acid biosynthesis; L-methionine biosynthesis via salvage pathway; L-methionine from S-methyl-5-thio-alpha-D-ribose 1-phosphate: step 3/6. Its function is as follows. Catalyzes the enolization of 2,3-diketo-5-methylthiopentyl-1-phosphate (DK-MTP-1-P) into 2-hydroxy-3-keto-5-methylthiopentenyl-1-phosphate (HK-MTPenyl-1-P). The chain is 2,3-diketo-5-methylthiopentyl-1-phosphate enolase from Bacillus cereus (strain AH820).